Reading from the N-terminus, the 513-residue chain is Gluconokinase (513 aa).

Residues Lys-16, Thr-261, Gly-300, and 412-416 (GFARS) contribute to the ATP site.

It belongs to the FGGY kinase family.

The enzyme catalyses D-gluconate + ATP = 6-phospho-D-gluconate + ADP + H(+). The protein operates within carbohydrate acid metabolism; D-gluconate degradation. Catabolite repression by gluconate. In Bacillus licheniformis, this protein is Gluconokinase (gntK).